The following is a 151-amino-acid chain: Protein ECM12 (151 aa).

An N-linked (GlcNAc...) asparagine glycan is attached at N2. 2 consecutive transmembrane segments (helical) span residues 17–37 (LLVF…IFFF) and 51–71 (AFLA…VGFF). N-linked (GlcNAc...) asparagine glycans are attached at residues N132 and N137.

Its subcellular location is the membrane. In terms of biological role, may be involved in cell wall organization and biogenesis. The sequence is that of Protein ECM12 (ECM12) from Saccharomyces cerevisiae (strain ATCC 204508 / S288c) (Baker's yeast).